A 708-amino-acid chain; its full sequence is Otogelin-like protein (708 aa).

A VWFD domain is found at 1–113 (KIIVNRLARK…SWEIEKSFEV (113 aa)). A glycan (N-linked (GlcNAc...) asparagine) is linked at Asn-553. Intrachain disulfides connect Cys-616/Cys-672, Cys-637/Cys-686, Cys-648/Cys-703, and Cys-652/Cys-705. The CTCK domain maps to 616–708 (CKREERICQK…EPIDCTCQWN (93 aa)).

It belongs to the otogelin family.

It localises to the secreted. This chain is Otogelin-like protein (OTOGL), found in Pongo abelii (Sumatran orangutan).